The following is a 304-amino-acid chain: Probable aquaporin NIP5-1 (304 aa).

The next 2 membrane-spanning stretches (helical) occupy residues 80–100 (LGAE…GPIV) and 106–126 (GAET…IIIL). The NPA 1 signature appears at 137–139 (NPS). Transmembrane regions (helical) follow at residues 157–177 (AYIA…KGVF), 195–215 (AFAL…AVAT), and 219–239 (AVGE…ILVA). An NPA 2 motif is present at residues 248 to 250 (NPV). Residues 266-286 (WVYLVAPTLGAISGAAVYTGV) traverse the membrane as a helical segment. Phosphoserine is present on Ser-301.

This sequence belongs to the MIP/aquaporin (TC 1.A.8) family. NIP (TC 1.A.8.12) subfamily. As to expression, expressed in rosette leaves.

The protein resides in the cell membrane. In terms of biological role, boric acid transporter. Low water transport activity. Plays an important role as plasma membrane boric acid channel for the boron uptake required for plant growth and development under boron limitation. The polypeptide is Probable aquaporin NIP5-1 (NIP5-1) (Arabidopsis thaliana (Mouse-ear cress)).